A 107-amino-acid polypeptide reads, in one-letter code: MTKSELVAQLALRFPQLVLKDADFAVKTMLDAMSDALSKGHRIEIRGFGSFGLNRRPARVGRNPKSGEKVQVPEKFVPHFKPGKELRERVDGRAGEPLKADDPDDER.

Residues 56–107 (RPARVGRNPKSGEKVQVPEKFVPHFKPGKELRERVDGRAGEPLKADDPDDER) form a disordered region. The segment covering 82 to 101 (PGKELRERVDGRAGEPLKAD) has biased composition (basic and acidic residues).

This sequence belongs to the bacterial histone-like protein family. In terms of assembly, heterodimer of an alpha and a beta chain.

Its function is as follows. This protein is one of the two subunits of integration host factor, a specific DNA-binding protein that functions in genetic recombination as well as in transcriptional and translational control. The protein is Integration host factor subunit beta of Burkholderia vietnamiensis (strain G4 / LMG 22486) (Burkholderia cepacia (strain R1808)).